Reading from the N-terminus, the 320-residue chain is 7-acetyl-epi-neemfruitin B aldo-keto reductase (320 aa).

Residue D51 coordinates NADP(+). Y56 serves as the catalytic Proton donor. NADP(+) contacts are provided by residues Q186 and 264–272 (FNKQRMEEN).

It belongs to the aldo/keto reductase family. As to expression, mainly expressed in petioles and, to a lower extent, in roots.

It catalyses the reaction 7-acetyl-epi-neemfruitin B + AH2 + H2O = (1S,3bR,4R,5aR,9aR,9bR,11aS)-1-[(4R)-5-[(2S)-3,3-dimethyloxiran-2-yl]-1,4-dihydroxybutan-2-yl]-3b,6,6,9a,11a-pentamethyl-7-oxo-1H,2H,3bH,4H,5H,5aH,6H,7H,9aH,9bH,10H,11H,11aH-cyclopenta[a]phenanthren-4-yl acetate + acetate + A + H(+). Its pathway is secondary metabolite biosynthesis; terpenoid biosynthesis. Aldo-keto reductase involved in the biosynthesis of limonoids triterpene natural products such as azadirachtin, an antifeedant widely used as bioinsecticide, and possessing many medicinal applications including anti-tumoral, anti-malarial, anti-rheumatic, antibacterial, anti-inflammatory, anti-pyretic and diuretic effects. Can use 7-acetyl-epi-neemfruitin B as substrate. The protein is 7-acetyl-epi-neemfruitin B aldo-keto reductase of Melia azedarach (Chinaberry tree).